Here is an 81-residue protein sequence, read N- to C-terminus: Small cysteine-rich protein 4 (81 aa).

Positions 1–23 are cleaved as a signal peptide; that stretch reads MDTKVACLLLIILGALTVQGAVS. The propeptide occupies 24 to 25; sequence GN.

It belongs to the Cnidaria small cysteine-rich protein (SCRiP) family. beta subfamily. In terms of processing, contains 4 disulfide bonds.

It localises to the secreted. It is found in the nematocyst. Functionally, induces neurotoxic symptoms on zebrafish. Has also been claimed to be implied in calcification, but tests on homolog proteins suggest that proteins of this family have a neurotoxic function and not a calcification function. The sequence is that of Small cysteine-rich protein 4 from Orbicella faveolata (Mountainous star coral).